Reading from the N-terminus, the 82-residue chain is Colonization factor (82 aa).

Residues 1–33 form the signal peptide; that stretch reads MFSSLKNKLNTFKSTLSLGVFLLFSAFANQALA.

Its subcellular location is the secreted. This chain is Colonization factor (cep), found in Vibrio cholerae serotype O1 (strain ATCC 39315 / El Tor Inaba N16961).